The primary structure comprises 65 residues: Large ribosomal subunit protein uL30 (65 aa).

It belongs to the universal ribosomal protein uL30 family. As to quaternary structure, part of the 50S ribosomal subunit.

In Brucella suis (strain ATCC 23445 / NCTC 10510), this protein is Large ribosomal subunit protein uL30.